The primary structure comprises 195 residues: Interferon tau-1 (195 aa).

The signal sequence occupies residues 1 to 23 (MAFVLSLLMALVLVSYGPGRSLG). 2 disulfide bridges follow: Cys24–Cys122 and Cys52–Cys162. Residue Asn101 is glycosylated (N-linked (GlcNAc...) asparagine).

The protein belongs to the alpha/beta interferon family. IFN-alphaII subfamily. As to expression, constitutively and exclusively expressed in the mononuclear cells of the extraembryonic trophectoderm.

The protein resides in the secreted. Functionally, paracrine hormone primarily responsible for maternal recognition of pregnancy. Interacts with endometrial receptors, probably type I interferon receptors, and blocks estrogen receptor expression, preventing the estrogen-induced increase in oxytocin receptor expression in the endometrium. This results in the suppression of the pulsatile endometrial release of the luteolytic hormone prostaglandin F2-alpha, hindering the regression of the corpus luteum (luteolysis) and therefore a return to ovarian cyclicity. This, and a possible direct effect of IFN-tau on prostaglandin synthesis, leads in turn to continued ovarian progesterone secretion, which stimulates the secretion by the endometrium of the nutrients required for the growth of the conceptus. In summary, displays particularly high antiviral and antiproliferative potency concurrently with particular weak cytotoxicity, high antiluteolytic activity and immunomodulatory properties. In contrast with other IFNs, IFN-tau is not virally inducible. This is Interferon tau-1 (IFNT1) from Bos taurus (Bovine).